The chain runs to 373 residues: Lipoyl synthase (373 aa).

Residues 14–36 (VSNDHPSSSPLQPGVKQSGEDKI) form a disordered region. 7 residues coordinate [4Fe-4S] cluster: Cys-81, Cys-86, Cys-92, Cys-107, Cys-111, Cys-114, and Ser-323. The region spanning 93–312 (FSHGTATFMI…EEYGMALGFS (220 aa)) is the Radical SAM core domain. Residues 346–373 (PAVSSTEHRERNTIASKSASKTESIHHR) are disordered. The span at 358–367 (TIASKSASKT) shows a compositional bias: polar residues.

The protein belongs to the radical SAM superfamily. Lipoyl synthase family. It depends on [4Fe-4S] cluster as a cofactor.

It is found in the cytoplasm. It carries out the reaction [[Fe-S] cluster scaffold protein carrying a second [4Fe-4S](2+) cluster] + N(6)-octanoyl-L-lysyl-[protein] + 2 oxidized [2Fe-2S]-[ferredoxin] + 2 S-adenosyl-L-methionine + 4 H(+) = [[Fe-S] cluster scaffold protein] + N(6)-[(R)-dihydrolipoyl]-L-lysyl-[protein] + 4 Fe(3+) + 2 hydrogen sulfide + 2 5'-deoxyadenosine + 2 L-methionine + 2 reduced [2Fe-2S]-[ferredoxin]. The protein operates within protein modification; protein lipoylation via endogenous pathway; protein N(6)-(lipoyl)lysine from octanoyl-[acyl-carrier-protein]: step 2/2. In terms of biological role, catalyzes the radical-mediated insertion of two sulfur atoms into the C-6 and C-8 positions of the octanoyl moiety bound to the lipoyl domains of lipoate-dependent enzymes, thereby converting the octanoylated domains into lipoylated derivatives. This is Lipoyl synthase from Xylella fastidiosa (strain M23).